The following is a 208-amino-acid chain: Calcyphosin-like protein (208 aa).

4 consecutive EF-hand domains span residues 39-74 (AGIK…YAVV), 75-110 (MEKE…PMSR), 111-146 (ARKE…KHHP), and 154-191 (SEEQ…VSAS). The Ca(2+) site is built by aspartate 52, aspartate 54, asparagine 56, threonine 58, glutamate 63, aspartate 88, aspartate 90, asparagine 92, threonine 94, and glutamate 99.

It localises to the cytoplasm. This Homo sapiens (Human) protein is Calcyphosin-like protein (CAPSL).